The primary structure comprises 197 residues: Heart- and neural crest derivatives-expressed protein 1 (197 aa).

Disordered stretches follow at residues 61–94 and 155–184; these read VVGPSQTSGRIENLGGKLGRRKGAPPKKERRRTE and VDGKRRREPQPTEGYWGAAPAGEKKLKGRT. Over residues 78 to 90 the composition is skewed to basic residues; that stretch reads LGRRKGAPPKKER. The bHLH domain occupies 80 to 132; sequence RRKGAPPKKERRRTESINSAFAELRECIPNVPADTKLSKIKTLRLATSYIGYL.

As to quaternary structure, efficient DNA binding requires dimerization with another bHLH protein. As to expression, highly expressed in the adult heart and expressed at lower levels in the intestine and gall bladder.

It localises to the nucleus. It is found in the nucleolus. Functionally, plays an essential role in cardiac morphogenesis. This is Heart- and neural crest derivatives-expressed protein 1 (hand1) from Xenopus laevis (African clawed frog).